The chain runs to 400 residues: Argininosuccinate synthase (400 aa).

9–17 (AYSGGLDTS) serves as a coordination point for ATP. Residue Y87 participates in L-citrulline binding. ATP is bound at residue G117. Residues T119, N123, and D124 each contribute to the L-aspartate site. N123 is an L-citrulline binding site. Positions 127, 176, 185, 261, and 273 each coordinate L-citrulline.

It belongs to the argininosuccinate synthase family. Type 1 subfamily. As to quaternary structure, homotetramer.

It localises to the cytoplasm. It carries out the reaction L-citrulline + L-aspartate + ATP = 2-(N(omega)-L-arginino)succinate + AMP + diphosphate + H(+). It participates in amino-acid biosynthesis; L-arginine biosynthesis; L-arginine from L-ornithine and carbamoyl phosphate: step 2/3. This is Argininosuccinate synthase from Pelodictyon phaeoclathratiforme (strain DSM 5477 / BU-1).